Here is a 216-residue protein sequence, read N- to C-terminus: Transmembrane emp24 domain-containing protein p24delta5 (216 aa).

The signal sequence occupies residues 1-27 (MAINRIAHGSLFLTVVLFFLTVNYGEA). Over 28 to 183 (IWLTIPTTGG…REVSETTNSR (156 aa)) the chain is Lumenal. The GOLD domain maps to 38 to 151 (TKCVSEEIQS…IEGVELQLRR (114 aa)). Asn86 is a glycosylation site (N-linked (GlcNAc...) asparagine). Residues 137–159 (AKKEKIEGVELQLRRLEGLVLSI) adopt a coiled-coil conformation. Residues Arg169 and Arg174 each carry the omega-N-methylated arginine modification. The helical transmembrane segment at 184–204 (VAWFSIMSLGVCVVVVGSQIL) threads the bilayer. The Cytoplasmic portion of the chain corresponds to 205 to 216 (YLKRYFHKKKLI). The COPII vesicle coat-binding signature appears at 209-210 (YF). Positions 209–216 (YFHKKKLI) match the COPI vesicle coat-binding motif.

It belongs to the EMP24/GP25L family. In terms of assembly, probably oligomerizes with other members of the EMP24/GP25L family. Associates with the COPI vesicle coat (coatomer). Associates with the COPII vesicle coat (coatomer). Interacts with p24beta2.

It is found in the endoplasmic reticulum membrane. Its function is as follows. Involved in vesicular protein trafficking. Mainly functions in the early secretory pathway. Thought to act as cargo receptor at the lumenal side for incorporation of secretory cargo molecules into transport vesicles and to be involved in vesicle coat formation at the cytoplasmic side. Interacts with p24beta2 at endoplasmic reticulum export sites for endoplasmic reticulum exit and coupled transport to the Golgi apparatus. Once in the Golgi, interacts very efficiently with the COPI machinery for retrograde transport back to the endoplasmic reticulum. The protein is Transmembrane emp24 domain-containing protein p24delta5 of Arabidopsis thaliana (Mouse-ear cress).